Consider the following 326-residue polypeptide: MSNISVIGTGSYVPNNIITNDFLSTIVDTSDEWIRTRTGILERRISKGENTIYMATESAKEAIKNANIEANDLDLIIVATLTPDNFMPSTACSVQKEIGAINALCFDISAACSGFIYGLEIACSMLKNSFRNKALIIGAENLSKIVDWEDRNTCVLFGDGAGAAILSKTKEEGILEFHSGSNGLKGEHLTCGVLKANNTPNKNDRLEKNNFIKMNGKEIFRFAVGAMNETICNIQEKTKWNLNEVKYIISHQANSRIIEYTAKKLNTEKDKFYMNLDKYGNTSAASIPIALDEMNKRGLLNKKDKIILVGFGGGLTFGGVAIVWSI.

Residues C112 and H251 contribute to the active site. The segment at 252-256 (QANSR) is ACP-binding. The active site involves N281.

The protein belongs to the thiolase-like superfamily. FabH family. As to quaternary structure, homodimer.

Its subcellular location is the cytoplasm. The enzyme catalyses malonyl-[ACP] + acetyl-CoA + H(+) = 3-oxobutanoyl-[ACP] + CO2 + CoA. The protein operates within lipid metabolism; fatty acid biosynthesis. Catalyzes the condensation reaction of fatty acid synthesis by the addition to an acyl acceptor of two carbons from malonyl-ACP. Catalyzes the first condensation reaction which initiates fatty acid synthesis and may therefore play a role in governing the total rate of fatty acid production. Possesses both acetoacetyl-ACP synthase and acetyl transacylase activities. Its substrate specificity determines the biosynthesis of branched-chain and/or straight-chain of fatty acids. This chain is Beta-ketoacyl-[acyl-carrier-protein] synthase III, found in Clostridium botulinum (strain Kyoto / Type A2).